A 260-amino-acid polypeptide reads, in one-letter code: Trans-aconitate 2-methyltransferase (260 aa).

This sequence belongs to the methyltransferase superfamily. Tam family.

The protein resides in the cytoplasm. It carries out the reaction trans-aconitate + S-adenosyl-L-methionine = (E)-3-(methoxycarbonyl)pent-2-enedioate + S-adenosyl-L-homocysteine. Catalyzes the S-adenosylmethionine monomethyl esterification of trans-aconitate. In Paracidovorax citrulli (strain AAC00-1) (Acidovorax citrulli), this protein is Trans-aconitate 2-methyltransferase.